The primary structure comprises 201 residues: ATP-dependent Clp protease proteolytic subunit (201 aa).

Residue serine 101 is the Nucleophile of the active site. Histidine 126 is a catalytic residue.

Belongs to the peptidase S14 family. In terms of assembly, component of the chloroplastic Clp protease core complex.

It is found in the plastid. The protein localises to the chloroplast stroma. It carries out the reaction Hydrolysis of proteins to small peptides in the presence of ATP and magnesium. alpha-casein is the usual test substrate. In the absence of ATP, only oligopeptides shorter than five residues are hydrolyzed (such as succinyl-Leu-Tyr-|-NHMec, and Leu-Tyr-Leu-|-Tyr-Trp, in which cleavage of the -Tyr-|-Leu- and -Tyr-|-Trp bonds also occurs).. Cleaves peptides in various proteins in a process that requires ATP hydrolysis. Has a chymotrypsin-like activity. Plays a major role in the degradation of misfolded proteins. The sequence is that of ATP-dependent Clp protease proteolytic subunit from Chlorella vulgaris (Green alga).